Here is a 309-residue protein sequence, read N- to C-terminus: ATP synthase gamma chain (309 aa).

This sequence belongs to the ATPase gamma chain family. As to quaternary structure, F-type ATPases have 2 components, CF(1) - the catalytic core - and CF(0) - the membrane proton channel. CF(1) has five subunits: alpha(3), beta(3), gamma(1), delta(1), epsilon(1). CF(0) has three main subunits: a, b and c.

The protein localises to the cell membrane. Functionally, produces ATP from ADP in the presence of a proton gradient across the membrane. The gamma chain is believed to be important in regulating ATPase activity and the flow of protons through the CF(0) complex. This is ATP synthase gamma chain from Mycolicibacterium gilvum (strain PYR-GCK) (Mycobacterium gilvum (strain PYR-GCK)).